Consider the following 1151-residue polypeptide: uncharacterized protein (1151 aa).

Disordered regions lie at residues 611-633 (FVKG…DEEE), 709-740 (NLVP…IMEV), 753-778 (PPIL…KSIL), 795-880 (PPVI…PPKL), and 1060-1151 (LKEP…TQQE). Pro residues-rich tracts occupy residues 754-773 (PILP…PQEP) and 811-842 (IVPP…PSQP). Residues 867-878 (PITPDTPAITPP) show a composition bias toward low complexity. Residues 1082–1091 (ESDNEDDELD) are compositionally biased toward acidic residues. A compositionally biased stretch (polar residues) spans 1131 to 1142 (PVDTSDATKIST).

This is an uncharacterized protein from Ostreid herpesvirus 1 (isolate France) (OsHV-1).